We begin with the raw amino-acid sequence, 173 residues long: NADH-ubiquinone oxidoreductase chain 6 (173 aa).

5 helical membrane passes run 1 to 21 (MVYFVSMMMIGLILGLMGVAS), 28 to 48 (AALGLVTAAGVGCGLLVSYGG), 53 to 73 (LILFLIYLGGMLVVFAYTAAL), 87 to 107 (VLMYVGIYLTGLVIAGKYFLV), and 139 to 159 (LGGWMLVLSGWVLLVTLFVVL).

It belongs to the complex I subunit 6 family.

The protein localises to the mitochondrion membrane. The catalysed reaction is a ubiquinone + NADH + 5 H(+)(in) = a ubiquinol + NAD(+) + 4 H(+)(out). Functionally, core subunit of the mitochondrial membrane respiratory chain NADH dehydrogenase (Complex I) that is believed to belong to the minimal assembly required for catalysis. Complex I functions in the transfer of electrons from NADH to the respiratory chain. The immediate electron acceptor for the enzyme is believed to be ubiquinone. This chain is NADH-ubiquinone oxidoreductase chain 6 (MT-ND6), found in Scyliorhinus canicula (Small-spotted catshark).